The sequence spans 335 residues: Acetyl-coenzyme A carboxylase carboxyl transferase subunit alpha (335 aa).

The CoA carboxyltransferase C-terminal domain maps to 48–308 (TLELKVDALR…KEILIEELKA (261 aa)).

It belongs to the AccA family. Acetyl-CoA carboxylase is a heterohexamer composed of biotin carboxyl carrier protein (AccB), biotin carboxylase (AccC) and two subunits each of ACCase subunit alpha (AccA) and ACCase subunit beta (AccD).

Its subcellular location is the cytoplasm. It carries out the reaction N(6)-carboxybiotinyl-L-lysyl-[protein] + acetyl-CoA = N(6)-biotinyl-L-lysyl-[protein] + malonyl-CoA. The protein operates within lipid metabolism; malonyl-CoA biosynthesis; malonyl-CoA from acetyl-CoA: step 1/1. Functionally, component of the acetyl coenzyme A carboxylase (ACC) complex. First, biotin carboxylase catalyzes the carboxylation of biotin on its carrier protein (BCCP) and then the CO(2) group is transferred by the carboxyltransferase to acetyl-CoA to form malonyl-CoA. The polypeptide is Acetyl-coenzyme A carboxylase carboxyl transferase subunit alpha (Pelodictyon phaeoclathratiforme (strain DSM 5477 / BU-1)).